Reading from the N-terminus, the 327-residue chain is MADGELNVDSLITRLLEVRGCRPGKIVQMTEAEVRGLCIKSREIFLSQPILLELEAPLKICGDIHGQYTDLLRLFEYGGFPPEANYLFLGDYVDRGKQSLETICLLLAYKIKYPENFFLLRGNHECASINRIYGFYDECKRRFNIKLWKTFTDCFNCLPIAAIVDEKIFCCHGGLSPDLQSMEQIRRIMRPTDVPDTGLLCDLLWSDPDKDVQGWGENDRGVSFTFGADVVSKFLNRHDLDLICRAHQVVEDGYEFFAKRQLVTLFSAPNYCGEFDNAGGMMSVDETLMCSFQILKPSEKKAKYQYGGLNSGRPVTPPRTANPPKKR.

An N-acetylalanine modification is found at A2. Residues D63, H65, D91, and N123 each contribute to the Mn(2+) site. The active-site Proton donor is the H124. Mn(2+) contacts are provided by H172 and H247. The tract at residues Q305 to R327 is disordered. T316 is modified (phosphothreonine).

This sequence belongs to the PPP phosphatase family. PP-1 subfamily. In terms of assembly, PP1 comprises a catalytic subunit, PPP1CA, PPP1CB or PPP1CC, which is folded into its native form by inhibitor 2 and glycogen synthetase kinase 3, and then complexed to one or several targeting or regulatory subunits. The targeting or regulatory subunits determine the substrate specificity of PP1. PPP1R12A, PPP1R12B and PPP1R12C mediate binding to myosin. PPP1R3A (in skeletal muscle), PPP1R3B (in liver), PPP1R3C, PPP1R3D and PPP1R3F (in brain) mediate binding to glycogen. PPP1R15A and PPP1R15B mediate binding to EIF2S1. Part of a complex containing PPP1R15B, PP1 and NCK1/2. Interacts with PPP1R7 and PPP1R12C. Interacts with PPP1R16B. Component of the PTW/PP1 phosphatase complex, composed of PPP1R10/PNUTS, TOX4, WDR82, and PPP1CA or PPP1CB or PPP1CC. Interacts with PPP1R8. Interacts with PPP1R12A and NUAK1; the interaction is direct. Interacts with TRIM28; the interaction is weak. Interacts with FOXP3. Interacts with RRP1B. Interacts with SERPINE1. Interacts with LZTR1. Component of the SHOC2-MRAS-PP1c (SMP) complex consisting of SHOC2, GTP-bound M-Ras/MRAS and the catalytic subunit of protein phosphatase 1 (either PPP1CA, PPP1CB or PPP1CC). SHOC2 and PP1c preferably bind M-Ras/MRAS, but they also bind K-Ras/KRAS, N-Ras/NRAS and H-Ras/HRAS; these interactions are GTP-dependent and both SHOC2 and PP1c are required to form a stable complex. Interacts with SHOC2 in the absence of Ras GTPases. The cofactor is Mn(2+).

It is found in the cytoplasm. The protein resides in the nucleus. Its subcellular location is the nucleoplasm. The protein localises to the nucleolus. The catalysed reaction is O-phospho-L-seryl-[protein] + H2O = L-seryl-[protein] + phosphate. It catalyses the reaction O-phospho-L-threonyl-[protein] + H2O = L-threonyl-[protein] + phosphate. The enzyme catalyses O-phospho-L-seryl-[myosin light chain] + H2O = L-seryl-[myosin light chain] + phosphate. It carries out the reaction O-phospho-L-threonyl-[myosin light chain] + H2O = L-threonyl-[myosin light chain] + phosphate. With respect to regulation, inhibited by the toxins okadaic acid, tautomycin and microcystin Leu-Arg. The phosphatase activity of the PPP1R15A-PP1 complex toward EIF2S1 is specifically inhibited by Salubrinal, a drug that protects cells from endoplasmic reticulum stress. Protein phosphatase that associates with over 200 regulatory proteins to form highly specific holoenzymes which dephosphorylate hundreds of biological targets. Protein phosphatase (PP1) is essential for cell division, it participates in the regulation of glycogen metabolism, muscle contractility and protein synthesis. Involved in regulation of ionic conductances and long-term synaptic plasticity. Component of the PTW/PP1 phosphatase complex, which plays a role in the control of chromatin structure and cell cycle progression during the transition from mitosis into interphase. In balance with CSNK1D and CSNK1E, determines the circadian period length, through the regulation of the speed and rhythmicity of PER1 and PER2 phosphorylation. May dephosphorylate CSNK1D and CSNK1E. Core component of the SHOC2-MRAS-PP1c (SMP) holophosphatase complex that regulates the MAPK pathway activation. The SMP complex specifically dephosphorylates the inhibitory phosphorylation at 'Ser-259' of RAF1 kinase, 'Ser-365' of BRAF kinase and 'Ser-214' of ARAF kinase, stimulating their kinase activities. The SMP complex enhances the dephosphorylation activity and substrate specificity of PP1c. The protein is Serine/threonine-protein phosphatase PP1-beta catalytic subunit (PPP1CB) of Bos taurus (Bovine).